The primary structure comprises 390 residues: NADH-quinone oxidoreductase subunit H (390 aa).

The next 9 membrane-spanning stretches (helical) occupy residues 4-24 (WLLT…ALLT), 78-98 (LVYT…FGGI), 120-140 (VLAL…GGWA), 157-177 (MISY…LVGS), 191-211 (GWMI…SFAE), 247-266 (YVNM…GGWR), 278-298 (IADI…FVFI), 315-337 (FGWK…YIAF), and 341-360 (WGWW…LLAL).

The protein belongs to the complex I subunit 1 family. NDH-1 is composed of 15 different subunits. Subunits NuoA, H, J, K, L, M, N constitute the membrane sector of the complex.

The protein localises to the cell membrane. The catalysed reaction is a quinone + NADH + 5 H(+)(in) = a quinol + NAD(+) + 4 H(+)(out). In terms of biological role, NDH-1 shuttles electrons from NADH, via FMN and iron-sulfur (Fe-S) centers, to quinones in the respiratory chain. The immediate electron acceptor for the enzyme in this species is believed to be ubiquinone. Couples the redox reaction to proton translocation (for every two electrons transferred, four hydrogen ions are translocated across the cytoplasmic membrane), and thus conserves the redox energy in a proton gradient. This subunit may bind ubiquinone. The polypeptide is NADH-quinone oxidoreductase subunit H (Deinococcus deserti (strain DSM 17065 / CIP 109153 / LMG 22923 / VCD115)).